A 460-amino-acid polypeptide reads, in one-letter code: DEAD-box helicase Dbp80 (460 aa).

At Ser26 the chain carries Phosphoserine. Thr30 carries the phosphothreonine modification. The short motif at 73–101 (KTFEALHLKASLLKGIYAMGFNTPSKIQE) is the Q motif element. A Helicase ATP-binding domain is found at 106 to 276 (TLLADPPQNM…RLIVADPTII (171 aa)). 119 to 126 (SQSGTGKT) serves as a coordination point for ATP. The DEAD box motif lies at 223-226 (DEAD). The 169-residue stretch at 287-455 (NIKQYYVKCK…VLNTDSADDI (169 aa)) folds into the Helicase C-terminal domain.

Belongs to the DEAD box helicase family. DDX19/DBP5 subfamily.

The protein localises to the cytoplasm. The protein resides in the nucleus. It is found in the nucleoplasm. The catalysed reaction is ATP + H2O = ADP + phosphate + H(+). Its function is as follows. ATP-dependent RNA helicase involved in mRNA export from the nucleus. In Drosophila melanogaster (Fruit fly), this protein is DEAD-box helicase Dbp80 (Dbp80).